The following is a 608-amino-acid chain: Kelch-like protein 10 (608 aa).

Positions 39–106 (CDVVIKVNGF…AYTRTVPITP (68 aa)) constitute a BTB domain. Kelch repeat units follow at residues 292-339 (ILFA…YLKG), 340-386 (YVYI…VLGN), 388-433 (IYAM…TLYG), 434-480 (KVYI…AYGE), 481-527 (HVYA…VVDD), and 529-574 (LFVV…VVPG). Ser501 bears the Phosphoserine mark.

Self-associates. Interacts with CUL3; indicative for the participation in an E3 ubiquitin ligase complex.

Its subcellular location is the cytoplasm. The protein operates within protein modification; protein ubiquitination. Functionally, may be a substrate-specific adapter of a CUL3-based E3 ubiquitin-protein ligase complex which mediates the ubiquitination and subsequent proteasomal degradation of target proteins during spermatogenesis. The protein is Kelch-like protein 10 (KLHL10) of Homo sapiens (Human).